The primary structure comprises 363 residues: UDP-N-acetylglucosamine--N-acetylmuramyl-(pentapeptide) pyrophosphoryl-undecaprenol N-acetylglucosamine transferase (363 aa).

UDP-N-acetyl-alpha-D-glucosamine is bound by residues 15–17, Asn127, Arg163, Ser191, Ile244, 263–268, and Gln288; these read TGG and ALTVSE.

Belongs to the glycosyltransferase 28 family. MurG subfamily.

It localises to the cell inner membrane. The enzyme catalyses di-trans,octa-cis-undecaprenyl diphospho-N-acetyl-alpha-D-muramoyl-L-alanyl-D-glutamyl-meso-2,6-diaminopimeloyl-D-alanyl-D-alanine + UDP-N-acetyl-alpha-D-glucosamine = di-trans,octa-cis-undecaprenyl diphospho-[N-acetyl-alpha-D-glucosaminyl-(1-&gt;4)]-N-acetyl-alpha-D-muramoyl-L-alanyl-D-glutamyl-meso-2,6-diaminopimeloyl-D-alanyl-D-alanine + UDP + H(+). It functions in the pathway cell wall biogenesis; peptidoglycan biosynthesis. In terms of biological role, cell wall formation. Catalyzes the transfer of a GlcNAc subunit on undecaprenyl-pyrophosphoryl-MurNAc-pentapeptide (lipid intermediate I) to form undecaprenyl-pyrophosphoryl-MurNAc-(pentapeptide)GlcNAc (lipid intermediate II). This is UDP-N-acetylglucosamine--N-acetylmuramyl-(pentapeptide) pyrophosphoryl-undecaprenol N-acetylglucosamine transferase from Pectobacterium carotovorum subsp. carotovorum (strain PC1).